Consider the following 119-residue polypeptide: Large ribosomal subunit protein bL19 (119 aa).

It belongs to the bacterial ribosomal protein bL19 family.

This protein is located at the 30S-50S ribosomal subunit interface and may play a role in the structure and function of the aminoacyl-tRNA binding site. The sequence is that of Large ribosomal subunit protein bL19 (rplS) from Mycoplasma genitalium (strain ATCC 33530 / DSM 19775 / NCTC 10195 / G37) (Mycoplasmoides genitalium).